Reading from the N-terminus, the 353-residue chain is UPF0283 membrane protein CKO_01392 (353 aa).

3 helical membrane-spanning segments follow: residues 70 to 90 (MVMG…VQWT), 99 to 119 (WVAL…VGSV), and 213 to 233 (ESTL…FIAW).

Belongs to the UPF0283 family.

Its subcellular location is the cell inner membrane. The protein is UPF0283 membrane protein CKO_01392 of Citrobacter koseri (strain ATCC BAA-895 / CDC 4225-83 / SGSC4696).